We begin with the raw amino-acid sequence, 187 residues long: Tumor necrosis factor ligand superfamily member 4 (187 aa).

Over 1-23 the chain is Cytoplasmic; it reads MEGVRPLEENVGNAPRPRFERNK. Residues 24 to 44 traverse the membrane as a helical; Signal-anchor for type II membrane protein segment; the sequence is LLLVASVVQALGLLLCLTYVC. Residues 45–187 lie on the Extracellular side of the membrane; the sequence is QHSHAPEVSL…LQNPGGYCAP (143 aa). The THD domain occupies 58–177; sequence PIENIMTQLQ…SVNAGELIVI (120 aa). 2 disulfides stabilise this stretch: cysteine 74/cysteine 164 and cysteine 101/cysteine 185. 2 N-linked (GlcNAc...) asparagine glycosylation sites follow: asparagine 94 and asparagine 156.

Belongs to the tumor necrosis factor family. Homotrimer.

It localises to the membrane. In terms of biological role, cytokine that binds to TNFRSF4. Co-stimulates T-cell proliferation and cytokine production. The sequence is that of Tumor necrosis factor ligand superfamily member 4 (TNFSF4) from Oryctolagus cuniculus (Rabbit).